Consider the following 238-residue polypeptide: 3,4-dihydroxy-2-butanone 4-phosphate synthase (238 aa).

D-ribulose 5-phosphate contacts are provided by residues 26–27, Asp-31, 166–170, and Glu-190; these read RE and RVGQT. Glu-27 contributes to the Mg(2+) binding site.

The protein belongs to the DHBP synthase family. Homodimer. It depends on Mg(2+) as a cofactor. The cofactor is Mn(2+).

The catalysed reaction is D-ribulose 5-phosphate = (2S)-2-hydroxy-3-oxobutyl phosphate + formate + H(+). It functions in the pathway cofactor biosynthesis; riboflavin biosynthesis; 2-hydroxy-3-oxobutyl phosphate from D-ribulose 5-phosphate: step 1/1. In terms of biological role, catalyzes the conversion of D-ribulose 5-phosphate to formate and 3,4-dihydroxy-2-butanone 4-phosphate. This is 3,4-dihydroxy-2-butanone 4-phosphate synthase from Archaeoglobus fulgidus (strain ATCC 49558 / DSM 4304 / JCM 9628 / NBRC 100126 / VC-16).